Here is a 337-residue protein sequence, read N- to C-terminus: Putative F-box protein At4g09870 (337 aa).

Positions 1–46 (MSISELSQDLLEEILCRVPAISLKKLRSTCKLWNSLFIDKRVRNEL) constitute an F-box domain.

In Arabidopsis thaliana (Mouse-ear cress), this protein is Putative F-box protein At4g09870.